The following is an 81-amino-acid chain: UPF0181 protein Spro_2806 (81 aa).

The disordered stretch occupies residues 43 to 81 (EKHQGDQVSVMFDDEDDDEEYQERPDDQADDDSEEDENY). Composition is skewed to acidic residues over residues 54 to 63 (FDDEDDDEEY) and 70 to 81 (QADDDSEEDENY).

It belongs to the UPF0181 family.

The sequence is that of UPF0181 protein Spro_2806 from Serratia proteamaculans (strain 568).